We begin with the raw amino-acid sequence, 725 residues long: ATP-dependent zinc metalloprotease FtsH (725 aa).

The Cytoplasmic segment spans residues 1–11; the sequence is MDKMKKPKINW. The chain crosses the membrane as a helical span at residues 12–32; that stretch reads LLIVIVGIIAALLITVLVLLF. Residues 33 to 160 are Extracellular-facing; sequence SPKTQPKSFD…LFGQHIVQEN (128 aa). A helical membrane pass occupies residues 161 to 181; sequence GFITFIKAIWFPALIAIIIFL. Residues 182 to 725 lie on the Cytoplasmic side of the membrane; the sequence is GYKAQSRAAS…EEETLAEKAE (544 aa). 252 to 259 serves as a coordination point for ATP; that stretch reads GPPGTGKT. Position 474 (His-474) interacts with Zn(2+). Glu-475 is a catalytic residue. Positions 478 and 552 each coordinate Zn(2+). The disordered stretch occupies residues 680–725; that stretch reads QVNESQEKDKQKNAQIKEDLSKMDKKDNLTKAKDKGEEETLAEKAE. Basic and acidic residues predominate over residues 684-725; sequence SQEKDKQKNAQIKEDLSKMDKKDNLTKAKDKGEEETLAEKAE.

This sequence in the central section; belongs to the AAA ATPase family. In the C-terminal section; belongs to the peptidase M41 family. In terms of assembly, homohexamer. The cofactor is Zn(2+).

The protein resides in the cell membrane. Its function is as follows. Acts as a processive, ATP-dependent zinc metallopeptidase for both cytoplasmic and membrane proteins. Plays a role in the quality control of integral membrane proteins. In Mycoplasmopsis pulmonis (strain UAB CTIP) (Mycoplasma pulmonis), this protein is ATP-dependent zinc metalloprotease FtsH.